We begin with the raw amino-acid sequence, 249 residues long: tRNA pseudouridine synthase A (249 aa).

The active-site Nucleophile is aspartate 54. Residue tyrosine 111 participates in substrate binding.

This sequence belongs to the tRNA pseudouridine synthase TruA family. In terms of assembly, homodimer.

It carries out the reaction uridine(38/39/40) in tRNA = pseudouridine(38/39/40) in tRNA. Functionally, formation of pseudouridine at positions 38, 39 and 40 in the anticodon stem and loop of transfer RNAs. This Mycoplasma capricolum subsp. capricolum (strain California kid / ATCC 27343 / NCTC 10154) protein is tRNA pseudouridine synthase A.